We begin with the raw amino-acid sequence, 473 residues long: Glutamyl-tRNA reductase (473 aa).

Residues 49–52 (TCNR), Ser-109, 114–116 (EHQ), and Gln-120 each bind substrate. The active-site Nucleophile is Cys-50. Residue 189 to 194 (GAGAMA) coordinates NADP(+). The tract at residues 422–473 (VAISAPQPSTDSPARAAYQPTDEAATDAEPRRDDAEPPSAAAAQDAGRESRP) is disordered.

This sequence belongs to the glutamyl-tRNA reductase family. Homodimer.

The enzyme catalyses (S)-4-amino-5-oxopentanoate + tRNA(Glu) + NADP(+) = L-glutamyl-tRNA(Glu) + NADPH + H(+). It participates in porphyrin-containing compound metabolism; protoporphyrin-IX biosynthesis; 5-aminolevulinate from L-glutamyl-tRNA(Glu): step 1/2. Functionally, catalyzes the NADPH-dependent reduction of glutamyl-tRNA(Glu) to glutamate 1-semialdehyde (GSA). The sequence is that of Glutamyl-tRNA reductase from Acidothermus cellulolyticus (strain ATCC 43068 / DSM 8971 / 11B).